Consider the following 267-residue polypeptide: MPRLCGSRSGALLLTLLLQASMGVRGWCLESSQCQDLSTESNLLACIRACKPDLSAETPVFPGNGDAQPLTENPRKYVMGHFRWDRFGRRNGSSSGGGGGGGGAGQKREEEEVAAGEGPGPRGDGVAPGPRQDKRSYSMEHFRWGKPVGKKRRPVKVYPNGAEDELAEAFPLEFRRELAGAPPEPARDPEAPAEGAAARAELEYGLVAEAEAAEKKDEGPYKMEHFRWGSPPKDKRYGGFMTSEKSQTPLVTLFKNAIVKNAHKKGQ.

An N-terminal signal peptide occupies residues 1–26 (MPRLCGSRSGALLLTLLLQASMGVRG). Phe-87 bears the Phenylalanine amide mark. 2 disordered regions span residues 88 to 156 (GRRN…RPVK) and 215 to 242 (KKDE…GFMT). Asn-91 is a glycosylation site (N-linked (GlcNAc...) asparagine). Residues 94-105 (SSGGGGGGGGAG) show a composition bias toward gly residues. The propeptide occupies 109–133 (EEEEVAAGEGPGPRGDGVAPGPRQD). The span at 131-143 (RQDKRSYSMEHFR) shows a compositional bias: basic and acidic residues. At Ser-136 the chain carries N-acetylserine; in Corticotropin. At Val-148 the chain carries Valine amide. Residues 215 to 237 (KKDEGPYKMEHFRWGSPPKDKRY) are compositionally biased toward basic and acidic residues.

This sequence belongs to the POMC family. Specific enzymatic cleavages at paired basic residues yield the different active peptides. In terms of tissue distribution, ACTH and MSH are produced by the pituitary gland.

It is found in the secreted. Functionally, stimulates the adrenal glands to release cortisol. Anorexigenic peptide. Increases the pigmentation of skin by increasing melanin production in melanocytes. In terms of biological role, increases the pigmentation of skin by increasing melanin production in melanocytes. Its function is as follows. Endogenous orexigenic opiate. Functionally, endogenous opiate. This chain is Pro-opiomelanocortin (POMC), found in Sus scrofa (Pig).